We begin with the raw amino-acid sequence, 240 residues long: Tetrahydromethanopterin S-methyltransferase subunit A (240 aa).

Topologically, residues 1 to 218 are cytoplasmic; sequence MADKREPAPG…KFHSGVHAGK (218 aa). Histidine 85 serves as a coordination point for 5-hydroxybenzimidazolylcob(I)amide. A helical transmembrane segment spans residues 219 to 239; sequence VEGAMIGLTITISLLGLLLLG. Residue arginine 240 is a topological domain, extracellular.

Belongs to the MtrA family. The complex is composed of 8 subunits; MtrA, MtrB, MtrC, MtrD, MtrE, MtrF, MtrG and MtrH. 5-hydroxybenzimidazolylcob(I)amide serves as cofactor.

It is found in the cell membrane. The catalysed reaction is 5-methyl-5,6,7,8-tetrahydromethanopterin + coenzyme M + 2 Na(+)(in) = 5,6,7,8-tetrahydromethanopterin + methyl-coenzyme M + 2 Na(+)(out). Its pathway is one-carbon metabolism; methanogenesis from CO(2); methyl-coenzyme M from 5,10-methylene-5,6,7,8-tetrahydromethanopterin: step 2/2. Part of a complex that catalyzes the formation of methyl-coenzyme M and tetrahydromethanopterin from coenzyme M and methyl-tetrahydromethanopterin. This is an energy-conserving, sodium-ion translocating step. This chain is Tetrahydromethanopterin S-methyltransferase subunit A, found in Methanosarcina mazei (strain ATCC BAA-159 / DSM 3647 / Goe1 / Go1 / JCM 11833 / OCM 88) (Methanosarcina frisia).